Here is an 80-residue protein sequence, read N- to C-terminus: 17 kDa surface antigen (80 aa).

Over residues 47–58 the composition is skewed to polar residues; it reads ALETTPSGTSIE. Residues 47–80 form a disordered region; the sequence is ALETTPSGTSIEWRNPDNGNYGYVTPSKTYKNST.

This sequence belongs to the rickettsiale 17 kDa surface antigen family.

Its subcellular location is the cell outer membrane. The protein is 17 kDa surface antigen (omp) of Rickettsia canadensis.